We begin with the raw amino-acid sequence, 141 residues long: Endoribonuclease YbeY (141 aa).

Residues H100, H104, and H110 each contribute to the Zn(2+) site.

This sequence belongs to the endoribonuclease YbeY family. It depends on Zn(2+) as a cofactor.

It localises to the cytoplasm. Its function is as follows. Single strand-specific metallo-endoribonuclease involved in late-stage 70S ribosome quality control and in maturation of the 3' terminus of the 16S rRNA. This Helicobacter pylori (strain J99 / ATCC 700824) (Campylobacter pylori J99) protein is Endoribonuclease YbeY.